Consider the following 708-residue polypeptide: MSQYTEKEPAAMDQESGKAVWPKPAGGYQTITGRRYGRRHAYVSFKPCMTRHERSLGRAGDDYEVLELDDVPKENSSGSSPLDQVDSSLPNEPIFEKSETEIPTCGSALNPTTESSQSFVAVHHSEEGRDTLGSSTNLHNHSEGEYTPGACNASGVQNGIALVHTDSYDPDGKHGEDNDRLQLSAEVVEGSRYQESSGNTLFELENREAEAYTGLSPPVPSFNCEVRDEFEGLDSVPLVKSSAGDTEFVHQNSQEIQRSSQDEMVSTKQQNNTSQERQTEHSPEDSACGPGRICSEQNTNDREKNHGSSPEQVVRPKVRKLISSSQVDQETGFNRHEAKQRSVQRWREALEVEESGSDDLLIKCEEYDGEHDCMFLDPPYSRVITQRETENNQVTPESGATAGRQEVDNPFWNGCGDYYQLYDKDEDSSECSDGEWSASLPHRFSGTEKDQSSSDESWETLPGKDENEPELQSDSSGPEEENQELSLQEGEQTSLEEGEIPWLQYNEVNESSSDEGNEPANEFAQPAFMLDGNNNLEDDSSVSEDLDVDWSLFDGFADGLGVAEAISYVDPQFLTYMALEERLAQAMETALAHLESLAVDVEVANPPASKESIDGLPETLVLEDHTAIGQEQCCPICCSEYIKDDIATELPCHHFFHKPCVSIWLQKSGTCPVCRRHFPPAVIEASAAPSSEPDPDAPPSNDSIAEAP.

The span at 1-10 (MSQYTEKEPA) shows a compositional bias: basic and acidic residues. Disordered regions lie at residues 1-30 (MSQYTEKEPAAMDQESGKAVWPKPAGGYQT) and 53-90 (ERSLGRAGDDYEVLELDDVPKENSSGSSPLDQVDSSLP). Ser2 carries the post-translational modification N-acetylserine. The span at 74–90 (ENSSGSSPLDQVDSSLP) shows a compositional bias: polar residues. Ser196 bears the Phosphoserine mark. 3 disordered regions span residues 244-342 (GDTE…KQRS), 385-411 (TQRETENNQVTPESGATAGRQEVDNPF), and 425-495 (DEDS…QTSL). Thr246 bears the Phosphothreonine mark. The span at 249 to 276 (VHQNSQEIQRSSQDEMVSTKQQNNTSQE) shows a compositional bias: polar residues. Phosphoserine occurs at positions 253, 309, and 323. Polar residues predominate over residues 322–332 (ISSSQVDQETG). Basic and acidic residues predominate over residues 333 to 342 (FNRHEAKQRS). The residue at position 342 (Ser342) is a Phosphoserine; by PKA. Thr389 bears the Phosphothreonine; by PKA mark. Position 432 is a phosphoserine (Ser432). Residues 467-483 (NEPELQSDSSGPEEENQ) are compositionally biased toward acidic residues. The span at 484-493 (ELSLQEGEQT) shows a compositional bias: polar residues. An interaction with PRKAR1A, PRKAR2A and PRKAR2B region spans residues 531 to 708 (DGNNNLEDDS…PSNDSIAEAP (178 aa)). The interval 550–570 (WSLFDGFADGLGVAEAISYVD) is mediates interaction with TBC1D31. Residues 634–675 (CPICCSEYIKDDIATELPCHHFFHKPCVSIWLQKSGTCPVCR) form an RING-type; atypical zinc finger. The interval 685-708 (ASAAPSSEPDPDAPPSNDSIAEAP) is disordered. Residues 699–708 (PSNDSIAEAP) show a composition bias toward low complexity.

Binds ubiquitin-conjugating enzymes (E2s). In vitro, interacts with the ubiquitin-conjugating enzyme, UBE2D2. The phosphorylated form interacts with PRKAR1A, PRKAR2A and PRKAR2B. Binds the catalytic subunits of cAMP-dependent protein kinase. Interacts with MFHAS1. Interacts with TBC1D31; the interaction is direct and recruits PJA2 to centrosomes.

It localises to the cytoplasm. The protein localises to the cell membrane. The protein resides in the endoplasmic reticulum membrane. It is found in the golgi apparatus membrane. Its subcellular location is the synapse. It localises to the postsynaptic density. The protein localises to the cytoskeleton. The protein resides in the microtubule organizing center. It is found in the centrosome. The catalysed reaction is S-ubiquitinyl-[E2 ubiquitin-conjugating enzyme]-L-cysteine + [acceptor protein]-L-lysine = [E2 ubiquitin-conjugating enzyme]-L-cysteine + N(6)-ubiquitinyl-[acceptor protein]-L-lysine.. It functions in the pathway protein modification; protein ubiquitination. Functionally, has E2-dependent E3 ubiquitin-protein ligase activity. Responsible for ubiquitination of cAMP-dependent protein kinase type I and type II-alpha/beta regulatory subunits and for targeting them for proteasomal degradation. Essential for PKA-mediated long-term memory processes. Through the ubiquitination of MFHAS1, positively regulates the TLR2 signaling pathway that leads to the activation of the downstream p38 and JNK MAP kinases and promotes the polarization of macrophages toward the pro-inflammatory M1 phenotype. Plays a role in ciliogenesis by ubiquitinating OFD1. In Pongo abelii (Sumatran orangutan), this protein is E3 ubiquitin-protein ligase Praja-2 (PJA2).